Here is a 166-residue protein sequence, read N- to C-terminus: Interferon gamma (166 aa).

An N-terminal signal peptide occupies residues 1–23; the sequence is MNYTSYILAFQLCVILCSSGCNC. The residue at position 24 (glutamine 24) is a Pyrrolidone carboxylic acid. Asparagine 39 and asparagine 106 each carry an N-linked (GlcNAc...) asparagine glycan.

The protein belongs to the type II (or gamma) interferon family. In terms of assembly, homodimer. Interacts with IFNGR1 (via extracellular domain); this interaction promotes IFNGR1 dimerization. Released primarily from activated T lymphocytes.

It is found in the secreted. In terms of biological role, type II interferon produced by immune cells such as T-cells and NK cells that plays crucial roles in antimicrobial, antiviral, and antitumor responses by activating effector immune cells and enhancing antigen presentation. Primarily signals through the JAK-STAT pathway after interaction with its receptor IFNGR1 to affect gene regulation. Upon IFNG binding, IFNGR1 intracellular domain opens out to allow association of downstream signaling components JAK2, JAK1 and STAT1, leading to STAT1 activation, nuclear translocation and transcription of IFNG-regulated genes. Many of the induced genes are transcription factors such as IRF1 that are able to further drive regulation of a next wave of transcription. Plays a role in class I antigen presentation pathway by inducing a replacement of catalytic proteasome subunits with immunoproteasome subunits. In turn, increases the quantity, quality, and repertoire of peptides for class I MHC loading. Increases the efficiency of peptide generation also by inducing the expression of activator PA28 that associates with the proteasome and alters its proteolytic cleavage preference. Up-regulates as well MHC II complexes on the cell surface by promoting expression of several key molecules such as cathepsins B/CTSB, H/CTSH, and L/CTSL. Participates in the regulation of hematopoietic stem cells during development and under homeostatic conditions by affecting their development, quiescence, and differentiation. This is Interferon gamma (IFNG) from Canis lupus familiaris (Dog).